The primary structure comprises 335 residues: Dolichyl-diphosphooligosaccharide--protein glycosyltransferase subunit MAGT1 (335 aa).

Positions 1-29 (MAAGWWFWCVSVTVAVALLIVCDVPSVSA) are cleaved as a signal peptide. Topologically, residues 30 to 184 (QRKKEMVLSE…DVNIRVIRPP (155 aa)) are extracellular. The Thioredoxin domain occupies 47 to 175 (WTNKRPVIRM…IARWIADRTD (129 aa)). A glycan (N-linked (GlcNAc...) asparagine) is linked at asparagine 71. A disulfide bridge connects residues cysteine 87 and cysteine 90. A helical membrane pass occupies residues 185-205 (NYAGPLMLGLLLAVIGGLVYL). Residues 206–209 (RRSN) are Cytoplasmic-facing. A helical transmembrane segment spans residues 210-230 (MEFLFNKTGWAFAALCFVLAM). Residues 231–270 (TSGQMWNHIRGPPYAHKNPHTGHVNYIHGSSQAQFVAETH) lie on the Extracellular side of the membrane. The chain crosses the membrane as a helical span at residues 271-291 (IVLLFNGGVTLGMVLLCEAAT). At 292–300 (SDMDIGKRK) the chain is on the cytoplasmic side. A helical transmembrane segment spans residues 301 to 321 (IMCVAGIGLVVLFFSWMLSIF). At 322-335 (RSKYHGYPYSFLMS) the chain is on the extracellular side.

The protein belongs to the OST3/OST6 family. In terms of assembly, accessory component of the STT3B-containing form of the oligosaccharyltransferase (OST) complex. OST exists in two different complex forms which contain common core subunits RPN1, RPN2, OST48, OST4, DAD1 and TMEM258, either STT3A or STT3B as catalytic subunits, and form-specific accessory subunits. OST can form stable complexes with the Sec61 complex or with both the Sec61 and TRAP complexes. The association of TUSC3 or MAGT1 with the STT3B-containing complex seems to be mutually exclusvice.

Its subcellular location is the cell membrane. The protein resides in the endoplasmic reticulum. It localises to the endoplasmic reticulum membrane. It functions in the pathway protein modification; protein glycosylation. Its function is as follows. Accessory component of the STT3B-containing form of the N-oligosaccharyl transferase (OST) complex which catalyzes the transfer of a high mannose oligosaccharide from a lipid-linked oligosaccharide donor to an asparagine residue within an Asn-X-Ser/Thr consensus motif in nascent polypeptide chains. Involved in N-glycosylation of STT3B-dependent substrates. Specifically required for the glycosylation of a subset of acceptor sites that are near cysteine residues; in this function seems to act redundantly with TUSC3. In its oxidized form proposed to form transient mixed disulfides with a glycoprotein substrate to facilitate access of STT3B to the unmodified acceptor site. Also has oxidoreductase-independent functions in the STT3B-containing OST complex possibly involving substrate recognition. Could indirectly play a role in Mg(2+) transport in epithelial cells. The chain is Dolichyl-diphosphooligosaccharide--protein glycosyltransferase subunit MAGT1 from Pongo abelii (Sumatran orangutan).